The chain runs to 414 residues: Imidazolonepropionase (414 aa).

The span at M1–P20 shows a compositional bias: polar residues. The disordered stretch occupies residues M1–Q26. Residues H81 and H83 each coordinate Fe(3+). Positions 81 and 83 each coordinate Zn(2+). The 4-imidazolone-5-propanoate site is built by R90, Y153, and H186. Y153 lines the N-formimidoyl-L-glutamate pocket. H251 is a binding site for Fe(3+). Residue H251 participates in Zn(2+) binding. A 4-imidazolone-5-propanoate-binding site is contributed by E254. Residue D325 participates in Fe(3+) binding. D325 is a Zn(2+) binding site. Residues N327 and G329 each contribute to the N-formimidoyl-L-glutamate site. S330 is a 4-imidazolone-5-propanoate binding site.

This sequence belongs to the metallo-dependent hydrolases superfamily. HutI family. It depends on Zn(2+) as a cofactor. Fe(3+) serves as cofactor.

Its subcellular location is the cytoplasm. It catalyses the reaction 4-imidazolone-5-propanoate + H2O = N-formimidoyl-L-glutamate. Its pathway is amino-acid degradation; L-histidine degradation into L-glutamate; N-formimidoyl-L-glutamate from L-histidine: step 3/3. In terms of biological role, catalyzes the hydrolytic cleavage of the carbon-nitrogen bond in imidazolone-5-propanoate to yield N-formimidoyl-L-glutamate. It is the third step in the universal histidine degradation pathway. The polypeptide is Imidazolonepropionase (Desulfotalea psychrophila (strain LSv54 / DSM 12343)).